The following is a 193-amino-acid chain: Putative RING finger protein ORF38 (193 aa).

The segment at 12–50 (CCICLDDEDVDRDNTIPCRHTVCRTCYVKPMLDQCPVCR) adopts an RING-type zinc-finger fold.

This Magallana gigas (Pacific oyster) protein is Putative RING finger protein ORF38.